Reading from the N-terminus, the 2210-residue chain is Orsellinic acid synthase ArmB (2210 aa).

The N-terminal acylcarrier protein transacylase domain (SAT) stretch occupies residues 38–261 (LLLDACHYAF…HKTTVDALYH (224 aa)). Residues 391 to 817 (QEPIAICGMS…GSNGALLLEE (427 aa)) enclose the Ketosynthase family 3 (KS3) domain. Residues cysteine 561, histidine 696, and histidine 736 each act as for beta-ketoacyl synthase activity in the active site. Positions 915–1240 (VFVFSGQGGQ…GLTLSSSLSQ (326 aa)) are malonyl-CoA:ACP transacylase (MAT) domain. Serine 1009 (for acyl/malonyl transferase activity) is an active-site residue. Residues 1307 to 1437 (MLQSWAQFPS…GQFRPLLVVD (131 aa)) form an N-terminal hotdog fold region. The 308-residue stretch at 1307-1614 (MLQSWAQFPS…FKKLRLNTLQ (308 aa)) folds into the PKS/mFAS DH domain. A product template (PT) domain region spans residues 1336–1611 (ITGHIVGDVP…GMCFKKLRLN (276 aa)). Histidine 1339 (proton acceptor; for dehydratase activity) is an active-site residue. Residues 1464–1614 (AEVFTTRTAY…FKKLRLNTLQ (151 aa)) are C-terminal hotdog fold. Aspartate 1525 acts as the Proton donor; for dehydratase activity in catalysis. Residues 1660 to 1735 (VDVQNTVLNI…ELVREISSTV (76 aa)) enclose the Carrier 1 domain. Serine 1694 carries the post-translational modification O-(pantetheine 4'-phosphoryl)serine. A disordered region spans residues 1739-1761 (AATAVNTPETASTPEPTLQGDAS). A Carrier 2 domain is found at 1845-1922 (SSPSSDLVDT…AVNQYISSKR (78 aa)). Serine 1882 is subject to O-(pantetheine 4'-phosphoryl)serine. Residues 1920–1946 (SKRPGKSPKQVEETAMDPDREEDLSDL) are disordered. Acidic residues predominate over residues 1933-1944 (TAMDPDREEDLS). Residues 1963–2202 (VPMSVQKSSS…LGAVTQALVD (240 aa)) form a thioesterase (TE) domain region.

The protein operates within secondary metabolite biosynthesis. Its function is as follows. Non-reducing polyketide synthase, part of the gene cluster that mediates the biosynthesis of melleolides, a range of antifungal and phytotoxic polyketide derivatives composed of an orsellinic acid (OA) moiety esterified to various sesquiterpene alcohols. The first step in melleolides biosynthesis is performed by the delta(6)-protoilludene synthase PRO1 which catalyzes the cyclization of farnesyl diphosphate to protoilludene. The orsellinic acid synthase armB produces OA by condensing acetyl-CoA with 3 malonyl-CoA units in a three-round chain elongation reaction folowed by a C2-C7 ring closure. ArmB further catalyzes the trans-esterification of OA to the various sesquiterpene alcohols resulting from the hydroxylation of protoilludene. The melleolides cluster also includes 5 cytochrome P450 monooxygenases, 4 NAD(+)-dependent oxidoreductases, one flavin-dependent oxidoreductase, and one O-methyltransferase. The cytochrome P450 monooxygenases may be involved in protoilludene hydroxylation to elaborate melleolides with multiple alcohol groups, such as melleolide D, which carries alcohol functionalities at C-4, C-5, C-10, and C-13. The role of the NAD(+)-dependent enzymes remains unknown. Numerous melleolides, including arnamial, show 5'-O-methylation of the aromatic moiety which may be catalyzed by the methyltransferase encoded in the cluster. The flavin-dependent oxidoreductase might represent the dehydrogenase yielding the aldehyde in position 1 of arnamial and other melleolides. Finally, several halogenase localized outside of the cluster (armH1 to armH5), are able to catalyze the transfer of a single chlorine atom to the melleolide backbone, resulting in a 6'-chloromelleolide product. This Armillaria ostoyae (Armillaria root rot fungus) protein is Orsellinic acid synthase ArmB.